The chain runs to 284 residues: Undecaprenyl-diphosphatase (284 aa).

Helical transmembrane passes span 7-27 (IILG…TGHL), 44-64 (EMFD…LYFH), 90-110 (LWLK…PLND), 116-136 (FYHF…FIVI), 167-187 (VLSL…ALLI), 197-217 (FTFF…ILHF), 229-249 (FGVL…AIKF), and 259-279 (FTFF…YAAF).

It belongs to the UppP family.

The protein resides in the cell membrane. It catalyses the reaction di-trans,octa-cis-undecaprenyl diphosphate + H2O = di-trans,octa-cis-undecaprenyl phosphate + phosphate + H(+). Functionally, catalyzes the dephosphorylation of undecaprenyl diphosphate (UPP). Confers resistance to bacitracin. This is Undecaprenyl-diphosphatase from Lactococcus lactis subsp. cremoris (strain MG1363).